Here is a 187-residue protein sequence, read N- to C-terminus: Large ribosomal subunit protein uL22 (187 aa).

Residues 155–187 (DAVSRAAPTDDAPAKKKLSKKKLARQKEKMMRE) form a disordered region. The span at 169 to 178 (KKKLSKKKLA) shows a compositional bias: basic residues.

The protein belongs to the universal ribosomal protein uL22 family.

This Lonomia obliqua (Moth) protein is Large ribosomal subunit protein uL22 (RpL17).